The sequence spans 943 residues: MTGSWNPTSIIIPVTLSFLLSFIHNFADVVAAPTRHLCLPEQRDALLELKNEFEIGKPSSNDYCYRNNSRVSPHPTTESWRNNSDCCNWEGITCDTKSGEVIELDLSCSWLYGSFHSNSSLFRLQNLRVLDLTQNDLDGEIPSSIGNLSHLTSLHLSYNQFLGLIPSSIENLSRLTSLHLSSNQFSGQIPSSIGNLSHLTSLELSSNQFSGQIPSSIGNLSNLTFLSLPSNDFFGQIPSSIGNLARLTYLYLSYNNFVGEIPSSFGNLNQLIVLQVDSNKLSGNVPISLLNLTRLSALLLSHNQFTGTIPNNISLLSNLMDFEASNNAFTGTLPSSLFNIPPLIRLDLSDNQLNGTLHFGNISSPSNLQYLIIGSNNFIGTIPRSLSRFVNLTLFDLSHLNTQCRPVDFSIFSHLKSLDDLRLSYLTTTTIDLNDILPYFKTLRSLDISGNLVSATNKSSVSSDPPSQSIQSLYLSGCGITDFPEILRTQHELGFLDVSNNKIKGQVPGWLWTLPNLFYLNLSNNTFISFESSSKKHGLSSVRKPSMIHLFASNNNFTGKIPSFICGLRSLNTLDLSENNYNGSIPRCMEKLKSTLFVLNLRQNNLSGGLPKHIFESLRSLDVGHNLLVGKLPRSLIRFSNLEVLNVESNRINDTFPFWLSSLSKLQVLVLRSNAFHGPIHEATFPELRIIDISHNHFNGTLPTEYFVKWSAMSSLGKNEDQSNEKYMGSGLYYQDSMVLMNKGLAMELVRILTIYTALDFSGNKFEGEIPKSIGLLKELLVLNLSNNAFGGHIPSSMGNLTALESLDVSQNKLTGEIPQELGDLSFLAYMNFSHNQLAGLVPGGTQFRRQNCSAFENNLGLFGPSLDEVCRDKHTPASQQNETTETEEEDEEEISWIAAAIGFIPGIVFGLTIGYILVSYKPEWFMNPFGRNNRRRRNTTTH.

Positions 1–31 are cleaved as a signal peptide; the sequence is MTGSWNPTSIIIPVTLSFLLSFIHNFADVVA. Residues 32–897 are Extracellular-facing; the sequence is APTRHLCLPE…EEEDEEEISW (866 aa). N-linked (GlcNAc...) asparagine glycans are attached at residues N67, N82, N118, N147, N171, N195, N219, and N222. LRR repeat units lie at residues 124-148, 150-171, 172-196, 198-220, 222-244, 245-267, 268-292, 293-317, 319-340, 341-364, and 366-389; these read LQNL…IGNL, HLTS…SIEN, LSRL…IGNL, HLTS…IGNL, NLTF…IGNL, ARLT…SFGN, LNQL…LLNL, TRLS…SLLS, LMDF…LFNI, PPLI…NISS, and SNLQ…LSRF. 2 N-linked (GlcNAc...) asparagine glycosylation sites follow: N291 and N312. N-linked (GlcNAc...) asparagine glycans are attached at residues N354 and N361. An LRR 12; degenerate repeat occupies 390–414; it reads VNLTLFDLSHLNTQCRPVDFSIFSH. N-linked (GlcNAc...) asparagine glycosylation is present at N391. 16 LRR repeats span residues 415–439, 440–463, 467–490, 491–514, 515–537, 544–568, 569–592, 593–617, 619–639, 640–665, 667–685, 686–709, 753–777, 778–801, 802–825, and 827–850; these read LKSL…ILPY, FKTL…SVSS, SQSI…LRTQ, HELG…LWTL, PNLF…SKKH, KPSM…ICGL, RSLN…MEKL, KSTL…IFES, RSLD…LIRF, SNLE…SLSK, QVLV…EATF, PELR…YFVK, LTIY…IGLL, KELL…MGNL, TALE…LGDL, and FLAY…QFRR. N457 carries an N-linked (GlcNAc...) asparagine glycan. Residues N521, N524, N556, N582, and N605 are each glycosylated (N-linked (GlcNAc...) asparagine). A glycan (N-linked (GlcNAc...) asparagine) is linked at N653. N699 carries N-linked (GlcNAc...) asparagine glycosylation. N-linked (GlcNAc...) asparagine glycans are attached at residues N784 and N800. N-linked (GlcNAc...) asparagine glycans are attached at residues N832, N852, and N882. Residues 898 to 918 traverse the membrane as a helical segment; sequence IAAAIGFIPGIVFGLTIGYIL. The Cytoplasmic segment spans residues 919-943; it reads VSYKPEWFMNPFGRNNRRRRNTTTH.

It belongs to the RLP family.

The protein resides in the cell membrane. The polypeptide is Receptor-like protein 35 (Arabidopsis thaliana (Mouse-ear cress)).